Here is a 206-residue protein sequence, read N- to C-terminus: Thymidylate kinase (206 aa).

Residue 11–18 participates in ATP binding; sequence GIDGAGKT.

Belongs to the thymidylate kinase family.

It catalyses the reaction dTMP + ATP = dTDP + ADP. Phosphorylation of dTMP to form dTDP in both de novo and salvage pathways of dTTP synthesis. In Burkholderia pseudomallei (strain 1106a), this protein is Thymidylate kinase.